Reading from the N-terminus, the 519-residue chain is Baeyer-Villiger monooxygenase (519 aa).

FAD-binding positions include glutamate 41, 49 to 52, aspartate 61, tyrosine 67, and valine 110; that span reads TWRD. 59–61 provides a ligand contact to NADP(+); that stretch reads ACD. NADP(+) is bound by residues 183–189, 206–207, and 292–293; these read TGASAIQ, RT, and KR. Methionine 399 is an FAD binding site. Residues 499–519 form a disordered region; that stretch reads GAKAAEADTGADTGADAEVSA.

It belongs to the FAD-binding monooxygenase family. FAD is required as a cofactor.

Catalyzes a Baeyer-Villiger oxidation reaction, i.e. the insertion of an oxygen atom into a carbon-carbon bond adjacent to a carbonyl, which converts ketones to esters or lactones using NADPH and/or NADH as an electron donor. Thus, can convert bicyclo[3.2.0]hept-2-en-6-one into the oxidative lactone products 2-oxabicyclo[3.3.0]oct-6-en-3-one and 3-oxabicyclo[3.3.0]oct-6-en-2-one. Is also able to catalyze the sulfoxidation of methyl phenyl sulfide (thioanisole). This Streptomyces coelicolor (strain ATCC BAA-471 / A3(2) / M145) protein is Baeyer-Villiger monooxygenase.